The sequence spans 64 residues: Sulfur carrier protein ThiS (64 aa).

1-thioglycine; alternate is present on Gly-64. Gly-64 is subject to Glycyl adenylate; alternate. A Glycyl cysteine thioester (Gly-Cys) (interchain with C-192 in TtuC); alternate cross-link involves residue Gly-64.

This sequence belongs to the sulfur carrier protein ThiS family. Post-translationally, C-terminal thiocarboxylation occurs in 2 steps, it is first acyl-adenylated (-COAMP) by TtuC, then thiocarboxylated (-COSH) by the cysteine desulfurases IscS or SufS.

The protein operates within cofactor biosynthesis; thiamine diphosphate biosynthesis. Is the sulfur donor in the synthesis of the thiazole phosphate moiety of thiamine phosphate. This is Sulfur carrier protein ThiS from Thermus thermophilus (strain ATCC BAA-163 / DSM 7039 / HB27).